A 1400-amino-acid chain; its full sequence is RNA polymerase II-associated protein 1 (1400 aa).

Disordered regions lie at residues 35-54, 60-95, 161-215, and 269-310; these read KGSR…QDHR, DSLP…EERL, VSDN…GKGL, and REQT…DKLE. 2 stretches are compositionally biased toward basic and acidic residues: residues 39 to 54 and 85 to 95; these read RRGD…QDHR and LPHDEDPEERL. The segment covering 269-282 has biased composition (basic and acidic residues); sequence REQTETKATKEQNP. A Phosphothreonine modification is found at Thr-329. The tract at residues 504–539 is disordered; it reads PSHDDKEDEDEDEELTKEKVNRKTPEEGSRPPPDLA. Over residues 509–518 the composition is skewed to acidic residues; sequence KEDEDEDEEL. The span at 519–539 shows a compositional bias: basic and acidic residues; it reads TKEKVNRKTPEEGSRPPPDLA.

It belongs to the RPAP1 family. In terms of assembly, part of an RNA polymerase II complex that contains POLR2A, POLR2B, POLR2C, POLR2D, POLR2E, POLR2F, POLR2G, POLR2H, POLR2I, POLR2J, POLR2K, POLR2L, RPAP1, FCP1 plus the general transcription factors TFIIB and TFIIF.

It is found in the nucleus. In terms of biological role, forms an interface between the RNA polymerase II enzyme and chaperone/scaffolding protein, suggesting that it is required to connect RNA polymerase II to regulators of protein complex formation. Required for interaction of the RNA polymerase II complex with acetylated histone H3. This Rattus norvegicus (Rat) protein is RNA polymerase II-associated protein 1 (Rpap1).